The sequence spans 149 residues: Flagellar assembly factor FliW (149 aa).

It belongs to the FliW family. As to quaternary structure, interacts with translational regulator CsrA and flagellin(s).

It localises to the cytoplasm. Functionally, acts as an anti-CsrA protein, binds CsrA and prevents it from repressing translation of its target genes, one of which is flagellin. Binds to flagellin and participates in the assembly of the flagellum. The chain is Flagellar assembly factor FliW from Thermotoga maritima (strain ATCC 43589 / DSM 3109 / JCM 10099 / NBRC 100826 / MSB8).